Here is a 423-residue protein sequence, read N- to C-terminus: Sphingomyelin phosphodiesterase 2 (423 aa).

Glu-49 is a binding site for Mg(2+). His-272 functions as the Proton acceptor in the catalytic mechanism. 2 consecutive transmembrane segments (helical) span residues 330 to 350 (VIGLGLLLLALLCVLAAGGGA) and 354 to 374 (AILLWTPSVGLVLWAGAFYLF). The segment at 400–423 (QDLGPEPQPALLLGQQEGDRTKEQ) is disordered.

This sequence belongs to the neutral sphingomyelinase family. Requires Mg(2+) as cofactor.

It localises to the cell membrane. It catalyses the reaction a sphingomyelin + H2O = phosphocholine + an N-acylsphing-4-enine + H(+). The catalysed reaction is an N-(acyl)-sphingosylphosphocholine + H2O = an N-acyl-sphingoid base + phosphocholine + H(+). It carries out the reaction 1-O-octadecyl-sn-glycero-3-phosphocholine + H2O = 1-O-octadecyl-sn-glycerol + phosphocholine + H(+). The enzyme catalyses 1-O-hexadecyl-sn-glycero-3-phosphocholine + H2O = 1-O-hexadecyl-sn-glycerol + phosphocholine + H(+). It catalyses the reaction 1-hexadecanoyl-sn-glycero-3-phosphocholine + H2O = 1-hexadecanoyl-sn-glycerol + phosphocholine + H(+). The catalysed reaction is a sphingosylphosphocholine + H2O = a sphingoid base + phosphocholine + H(+). It participates in lipid metabolism; sphingolipid metabolism. Catalyzes, at least in vitro, the hydrolysis of sphingomyelin to form ceramide and phosphocholine. Also hydrolyzes 1-O-alkyl-2-lyso-sn-glycero-3-phosphocholine (lyso-platelet-activating factor) in vivo. Also acts on 1-acyl-2-lyso-sn-glycero-3-phosphocholine (lyso-PC) and sphingosylphosphocholine. The sequence is that of Sphingomyelin phosphodiesterase 2 from Homo sapiens (Human).